Consider the following 350-residue polypeptide: Bifunctional UDP-glucose 4-epimerase and UDP-xylose 4-epimerase 1 (350 aa).

NAD(+)-binding positions include 15 to 17, 36 to 40, 67 to 68, Phe-89, and Lys-93; these read GFI, DNFDN, and DL. Ser-133 lines the substrate pocket. Tyr-157 functions as the Proton acceptor in the catalytic mechanism. The NAD(+) site is built by Lys-161 and Tyr-185.

This sequence belongs to the NAD(P)-dependent epimerase/dehydratase family. It depends on NAD(+) as a cofactor.

It catalyses the reaction UDP-alpha-D-glucose = UDP-alpha-D-galactose. The catalysed reaction is UDP-beta-L-arabinopyranose = UDP-alpha-D-xylose. It functions in the pathway carbohydrate metabolism; galactose metabolism. The protein operates within nucleotide-sugar biosynthesis; UDP-L-arabinose biosynthesis; UDP-L-arabinose from UDP-alpha-D-xylose: step 1/1. It participates in cell wall biogenesis; cell wall polysaccharide biosynthesis. Inhibited by Hg(2+). Catalyzes the interconversion between UDP-glucose and UDP-galactose and the interconversion between UDP-arabinose and UDP-xylose. The protein is Bifunctional UDP-glucose 4-epimerase and UDP-xylose 4-epimerase 1 of Pisum sativum (Garden pea).